Reading from the N-terminus, the 506-residue chain is Nucleoside import ATP-binding protein NupA (506 aa).

ABC transporter domains are found at residues 7-242 (IQMI…VGRS) and 259-503 (LEIK…VGGN). 39 to 46 (GENGAGKS) provides a ligand contact to ATP.

This sequence belongs to the ABC transporter superfamily. As to quaternary structure, the complex is composed of two ATP-binding proteins (NupA), two transmembrane proteins (NupB and NupC) and a solute-binding protein (BmpA).

The protein localises to the cell membrane. In terms of biological role, part of an ABC transporter complex involved in the uptake of all common nucleosides. Responsible for energy coupling to the transport system. The protein is Nucleoside import ATP-binding protein NupA of Lactococcus lactis subsp. cremoris (strain MG1363).